Here is an 802-residue protein sequence, read N- to C-terminus: Lon protease (802 aa).

Residues 21 to 215 enclose the Lon N-terminal domain; sequence LPLLPVRDII…KIIQILNAEI (195 aa). Residue 367-374 participates in ATP binding; it reads GPPGVGKT. The Lon proteolytic domain maps to 603–784; sequence ENDVGVATGL…DEVISLTIER (182 aa). Active-site residues include Ser690 and Lys733.

This sequence belongs to the peptidase S16 family. In terms of assembly, homohexamer. Organized in a ring with a central cavity.

The protein resides in the cytoplasm. The catalysed reaction is Hydrolysis of proteins in presence of ATP.. ATP-dependent serine protease that mediates the selective degradation of mutant and abnormal proteins as well as certain short-lived regulatory proteins. Required for cellular homeostasis and for survival from DNA damage and developmental changes induced by stress. Degrades polypeptides processively to yield small peptide fragments that are 5 to 10 amino acids long. Binds to DNA in a double-stranded, site-specific manner. The protein is Lon protease of Endomicrobium trichonymphae.